The sequence spans 130 residues: Ornithine decarboxylase antizyme (130 aa).

Residues 1–14 (SDVPVHHRTDHDRA) are compositionally biased toward basic and acidic residues. A disordered region spans residues 1 to 56 (SDVPVHHRTDHDRASLLTGSSRKSSVDSAGGSLFEASSRASSPSSSSSSECSDTES). Positions 17-27 (LTGSSRKSSVD) are enriched in polar residues. Over residues 32 to 51 (SLFEASSRASSPSSSSSSEC) the composition is skewed to low complexity.

It belongs to the ODC antizyme family. As to quaternary structure, interacts with ODC1 and thereby sterically blocks ODC homodimerization.

Its function is as follows. Ornithine decarboxylase (ODC) antizyme protein that negatively regulates ODC activity and intracellular polyamine biosynthesis and uptake in response to increased intracellular polyamine levels. Binds to ODC monomers, inhibiting the assembly of the functional ODC homodimer, and targets the monomers for ubiquitin-independent proteolytic destruction by the 26S proteasome. The polypeptide is Ornithine decarboxylase antizyme (Oda) (Drosophila virilis (Fruit fly)).